The following is a 32-amino-acid chain: DCAGYMRECKEKLCCSGYVCSSRWKWCVLPAP.

Disulfide bonds link C2-C15, C9-C20, and C14-C27.

The protein belongs to the neurotoxin 10 (Hwtx-1) family. 16 (Hntx-8) subfamily. Expressed by the venom gland.

It is found in the secreted. Ion channel inhibitor. The protein is U3-theraphotoxin-Hhn1r of Cyriopagopus hainanus (Chinese bird spider).